Here is a 1733-residue protein sequence, read N- to C-terminus: Desertorin synthase (1733 aa).

The N-terminal acylcarrier protein transacylase domain (SAT) stretch occupies residues 21–358 (RIRQQSRSSR…HAPTRDLTEW (338 aa)). A Ketosynthase family 3 (KS3) domain is found at 372–799 (DCRIAVVGMS…GGNTALLLEE (428 aa)). The segment covering 406 to 422 (HVPPDRYDVQSHTDPTG) has biased composition (basic and acidic residues). Residues 406 to 429 (HVPPDRYDVQSHTDPTGRRMNTSQ) are disordered. Catalysis depends on for beta-ketoacyl synthase activity residues Cys544, His679, and His718. A malonyl-CoA:ACP transacylase (MAT) domain region spans residues 903–1211 (FVFSGQGSFY…DNWHTLAGSM (309 aa)). An N-terminal hotdog fold region spans residues 1288-1420 (HRIVEETFWA…GTVSVGNAAS (133 aa)). Residues 1288–1598 (HRIVEETFWA…LRPLPRILMH (311 aa)) enclose the PKS/mFAS DH domain. Residues 1299–1594 (GGRVVMESNV…AGVTLRPLPR (296 aa)) are product template (PT) domain. The active-site Proton acceptor; for dehydratase activity is the His1320. The tract at residues 1448–1598 (ADRLTRDTVY…LRPLPRILMH (151 aa)) is C-terminal hotdog fold. Asp1506 serves as the catalytic Proton donor; for dehydratase activity. Positions 1608-1659 (HNWGNSPAKPEAKPEMVPTSGSSSAAGSPSGSSAGPLSIPERLADPSETSFQ) are disordered. Low complexity predominate over residues 1627 to 1643 (SGSSSAAGSPSGSSAGP). Positions 1659–1733 (QSKASKVSKA…TVGEVKRQML (75 aa)) constitute a Carrier domain. At Ser1696 the chain carries O-(pantetheine 4'-phosphoryl)serine.

Pantetheine 4'-phosphate serves as cofactor.

It functions in the pathway secondary metabolite biosynthesis. In terms of biological role, non-reducing polyketide synthase; part of the gene cluster that mediates the biosynthesis of the bicoumarin desertorin. The non-reducing polyketide synthase desS first catalyzes the formation of the pentaketidic 4,7-dihydroxy-5-methylcoumarin from acetyl coenzyme A and 4 malonyl coenzyme A molecules. Further O-methylation by desB leads to the formation of 7-demethylsiderin. Then, an oxidative phenol coupling catalyzed by the cytochrome P450 monooxygenase desC forms the 6,8'-dimer M-desertorin A via dimerization the monomeric precursor, 7-demethylsiderin. M-desertorin A is further converted to M-desertorin C. The protein is Desertorin synthase of Aspergillus desertorum (Emericella desertorum).